Consider the following 184-residue polypeptide: NADH-quinone oxidoreductase subunit B 2 (184 aa).

4 residues coordinate [4Fe-4S] cluster: Cys59, Cys60, Cys125, and Cys153.

Belongs to the complex I 20 kDa subunit family. NDH-1 is composed of 14 different subunits. Subunits NuoB, C, D, E, F, and G constitute the peripheral sector of the complex. The cofactor is [4Fe-4S] cluster.

It is found in the cell inner membrane. It carries out the reaction a quinone + NADH + 5 H(+)(in) = a quinol + NAD(+) + 4 H(+)(out). In terms of biological role, NDH-1 shuttles electrons from NADH, via FMN and iron-sulfur (Fe-S) centers, to quinones in the respiratory chain. Couples the redox reaction to proton translocation (for every two electrons transferred, four hydrogen ions are translocated across the cytoplasmic membrane), and thus conserves the redox energy in a proton gradient. The polypeptide is NADH-quinone oxidoreductase subunit B 2 (Solibacter usitatus (strain Ellin6076)).